Reading from the N-terminus, the 149-residue chain is MHCPFCFAVDTKVIDSRLVGEGSSVRRRRQCLVCNERFTTFEVAELVMPRVVKSNDVREPFNEEKLRSGMLRALEKRPVSSDYVEMAINHIKSQLRATGEREVPSKMIGNLVMEQLKKLDKVAYIRFASVYRSFEDIKEFGEEIARLED.

Residues 3–34 fold into a zinc finger; sequence CPFCFAVDTKVIDSRLVGEGSSVRRRRQCLVC. The 91-residue stretch at 49-139 folds into the ATP-cone domain; that stretch reads PRVVKSNDVR…VYRSFEDIKE (91 aa).

Belongs to the NrdR family. It depends on Zn(2+) as a cofactor.

Negatively regulates transcription of bacterial ribonucleotide reductase nrd genes and operons by binding to NrdR-boxes. In Shigella flexneri, this protein is Transcriptional repressor NrdR.